The chain runs to 394 residues: Chorismate synthase (394 aa).

NADP(+) contacts are provided by Arg42 and Arg48. FMN contacts are provided by residues 137–139 (RAS), 258–259 (QA), Gly302, 317–321 (KPIAT), and Arg343.

The protein belongs to the chorismate synthase family. In terms of assembly, homotetramer. Requires FMNH2 as cofactor.

The enzyme catalyses 5-O-(1-carboxyvinyl)-3-phosphoshikimate = chorismate + phosphate. Its pathway is metabolic intermediate biosynthesis; chorismate biosynthesis; chorismate from D-erythrose 4-phosphate and phosphoenolpyruvate: step 7/7. Its function is as follows. Catalyzes the anti-1,4-elimination of the C-3 phosphate and the C-6 proR hydrogen from 5-enolpyruvylshikimate-3-phosphate (EPSP) to yield chorismate, which is the branch point compound that serves as the starting substrate for the three terminal pathways of aromatic amino acid biosynthesis. This reaction introduces a second double bond into the aromatic ring system. The polypeptide is Chorismate synthase (Streptomyces coelicolor (strain ATCC BAA-471 / A3(2) / M145)).